The following is a 290-amino-acid chain: GTPase Era (290 aa).

Positions 2–169 (KSGFVSIIGR…KDKIYANLQE (168 aa)) constitute an Era-type G domain. Positions 10–17 (GRPSTGKS) are G1. Residue 10-17 (GRPSTGKS) coordinates GTP. The tract at residues 36-40 (QTTRN) is G2. The tract at residues 57–60 (DTPG) is G3. GTP contacts are provided by residues 57–61 (DTPGF) and 119–122 (NKID). Residues 119–122 (NKID) form a G4 region. A G5 region spans residues 148-150 (ISA). Residues 200–276 (LKEELPYSLY…DLFLQVKLRK (77 aa)) enclose the KH type-2 domain.

The protein belongs to the TRAFAC class TrmE-Era-EngA-EngB-Septin-like GTPase superfamily. Era GTPase family. In terms of assembly, monomer.

It localises to the cytoplasm. The protein resides in the cell inner membrane. In terms of biological role, an essential GTPase that binds both GDP and GTP, with rapid nucleotide exchange. Plays a role in 16S rRNA processing and 30S ribosomal subunit biogenesis and possibly also in cell cycle regulation and energy metabolism. The protein is GTPase Era of Borrelia hermsii (strain HS1 / DAH).